Reading from the N-terminus, the 227-residue chain is 2,3-bisphosphoglycerate-dependent phosphoglycerate mutase (227 aa).

Residues 7–14, 20–21, R59, 86–89, K97, 113–114, and 182–183 contribute to the substrate site; these read RHGFSEWN, TG, ERHY, RR, and GN. The active-site Tele-phosphohistidine intermediate is H8. E86 functions as the Proton donor/acceptor in the catalytic mechanism.

This sequence belongs to the phosphoglycerate mutase family. BPG-dependent PGAM subfamily. As to quaternary structure, homodimer.

The catalysed reaction is (2R)-2-phosphoglycerate = (2R)-3-phosphoglycerate. It participates in carbohydrate degradation; glycolysis; pyruvate from D-glyceraldehyde 3-phosphate: step 3/5. Its function is as follows. Catalyzes the interconversion of 2-phosphoglycerate and 3-phosphoglycerate. This chain is 2,3-bisphosphoglycerate-dependent phosphoglycerate mutase, found in Histophilus somni (strain 129Pt) (Haemophilus somnus).